Reading from the N-terminus, the 550-residue chain is ATP synthase subunit alpha (550 aa).

172 to 179 (GDRKTGKT) contributes to the ATP binding site. Residues 521-550 (EPAAEPLAGEEDRETVTRFHDDATDRPAGS) are disordered. Over residues 534 to 550 (ETVTRFHDDATDRPAGS) the composition is skewed to basic and acidic residues.

It belongs to the ATPase alpha/beta chains family. In terms of assembly, F-type ATPases have 2 components, CF(1) - the catalytic core - and CF(0) - the membrane proton channel. CF(1) has five subunits: alpha(3), beta(3), gamma(1), delta(1), epsilon(1). CF(0) has three main subunits: a(1), b(2) and c(9-12). The alpha and beta chains form an alternating ring which encloses part of the gamma chain. CF(1) is attached to CF(0) by a central stalk formed by the gamma and epsilon chains, while a peripheral stalk is formed by the delta and b chains.

It localises to the cell membrane. The enzyme catalyses ATP + H2O + 4 H(+)(in) = ADP + phosphate + 5 H(+)(out). Functionally, produces ATP from ADP in the presence of a proton gradient across the membrane. The alpha chain is a regulatory subunit. This Salinispora tropica (strain ATCC BAA-916 / DSM 44818 / JCM 13857 / NBRC 105044 / CNB-440) protein is ATP synthase subunit alpha.